Consider the following 68-residue polypeptide: Large ribosomal subunit protein bL35 (68 aa).

Belongs to the bacterial ribosomal protein bL35 family.

The chain is Large ribosomal subunit protein bL35 from Fusobacterium nucleatum subsp. nucleatum (strain ATCC 25586 / DSM 15643 / BCRC 10681 / CIP 101130 / JCM 8532 / KCTC 2640 / LMG 13131 / VPI 4355).